Here is a 261-residue protein sequence, read N- to C-terminus: Antiviral protein S (261 aa).

2 disulfides stabilise this stretch: Cys34/Cys258 and Cys84/Cys105. Residue Glu175 is part of the active site.

The protein belongs to the ribosome-inactivating protein family. Type 1 RIP subfamily.

It catalyses the reaction Endohydrolysis of the N-glycosidic bond at one specific adenosine on the 28S rRNA.. Inhibits viral infection of plants, and protein synthesis in vitro. This Phytolacca americana (American pokeweed) protein is Antiviral protein S.